Consider the following 291-residue polypeptide: Ribonuclease Z (291 aa).

Zn(2+) contacts are provided by His61, His63, Asp65, His66, His133, Asp201, and His257. The Proton acceptor role is filled by Asp65.

The protein belongs to the RNase Z family. As to quaternary structure, homodimer. Zn(2+) is required as a cofactor.

It catalyses the reaction Endonucleolytic cleavage of RNA, removing extra 3' nucleotides from tRNA precursor, generating 3' termini of tRNAs. A 3'-hydroxy group is left at the tRNA terminus and a 5'-phosphoryl group is left at the trailer molecule.. In terms of biological role, zinc phosphodiesterase, which displays some tRNA 3'-processing endonuclease activity. Probably involved in tRNA maturation, by removing a 3'-trailer from precursor tRNA. The sequence is that of Ribonuclease Z from Saccharolobus solfataricus (strain ATCC 35092 / DSM 1617 / JCM 11322 / P2) (Sulfolobus solfataricus).